The chain runs to 483 residues: GTPase Der (483 aa).

EngA-type G domains follow at residues 3–167 and 212–387; these read FTLA…GEER and LRIA…EIWN. GTP is bound by residues 9–16, 56–60, 119–122, 218–225, 265–269, and 330–333; these read GRPNVGKS, DTAGL, NKAE, GRPNAGKS, DTAGM, and NKWD. Residues 388-472 form the KH-like domain; sequence RRISTGRLNR…PIRLSLRTSD (85 aa).

Belongs to the TRAFAC class TrmE-Era-EngA-EngB-Septin-like GTPase superfamily. EngA (Der) GTPase family. In terms of assembly, associates with the 50S ribosomal subunit.

Its function is as follows. GTPase that plays an essential role in the late steps of ribosome biogenesis. This Brucella abortus (strain 2308) protein is GTPase Der.